The sequence spans 366 residues: Probable protein arginine N-methyltransferase 1.2 (366 aa).

The 303-residue stretch at 45–347 folds into the SAM-dependent MTase PRMT-type domain; it reads ADYYFDSYSH…NPRDVDIKLS (303 aa). Residues E157 and E166 contribute to the active site.

This sequence belongs to the class I-like SAM-binding methyltransferase superfamily. Protein arginine N-methyltransferase family. As to quaternary structure, interacts with FIB2 and PRMT11.

The protein localises to the nucleus. Its subcellular location is the cytoplasm. In terms of biological role, methylates (mono and asymmetric dimethylation) the guanidino nitrogens of arginyl residues present in a glycine and arginine-rich domain. Type I arginine methyltransferase active on both histones and non-histone proteins. Mediates the methylation of MED36A. The polypeptide is Probable protein arginine N-methyltransferase 1.2 (PRMT12) (Arabidopsis thaliana (Mouse-ear cress)).